The sequence spans 491 residues: Putative diacyglycerol O-acyltransferase MT2557 (491 aa).

Residue histidine 145 is the Proton acceptor of the active site.

Belongs to the long-chain O-acyltransferase family.

It carries out the reaction an acyl-CoA + a 1,2-diacyl-sn-glycerol = a triacyl-sn-glycerol + CoA. It participates in glycerolipid metabolism; triacylglycerol biosynthesis. The sequence is that of Putative diacyglycerol O-acyltransferase MT2557 from Mycobacterium tuberculosis (strain CDC 1551 / Oshkosh).